Here is a 507-residue protein sequence, read N- to C-terminus: Probable serine/threonine-protein kinase DDB_G0268078 (507 aa).

Residues 4–286 enclose the Protein kinase domain; the sequence is YQFIKQVGDG…PLQALQHRYF (283 aa). ATP is bound by residues 10-18 and K33; that span reads VGDGAYGDV. The active-site Proton acceptor is the D125. Positions 323 to 347 are enriched in low complexity; sequence NYSNNNNNNNLNSNSENLNNVNKNN. Disordered regions lie at residues 323-364, 381-404, and 428-507; these read NYSN…PKNS, NVNN…KLDS, and QQPP…NSKL. Over residues 348-361 the composition is skewed to polar residues; that stretch reads QQPHSPQKIQTPKP. Positions 381–399 are enriched in low complexity; the sequence is NVNNNNNNYNSNTTSGYYN. A compositionally biased stretch (pro residues) spans 429–450; sequence QPPPQSQPPQSQPPPQSQPPPI. Over residues 451-470 the composition is skewed to low complexity; it reads LTQQQQQQQQQQQQQQQLPS. Composition is skewed to polar residues over residues 471-481 and 491-507; these read KTTIYHNTNHL and RGIS…NSKL.

Belongs to the protein kinase superfamily. CMGC Ser/Thr protein kinase family. CDC2/CDKX subfamily.

The catalysed reaction is L-seryl-[protein] + ATP = O-phospho-L-seryl-[protein] + ADP + H(+). It carries out the reaction L-threonyl-[protein] + ATP = O-phospho-L-threonyl-[protein] + ADP + H(+). The protein is Probable serine/threonine-protein kinase DDB_G0268078 of Dictyostelium discoideum (Social amoeba).